A 348-amino-acid chain; its full sequence is PDZ and LIM domain protein 2 (348 aa).

The PDZ domain occupies methionine 1–glutamine 84. The segment at serine 67–glycine 139 is disordered. Positions arginine 103–leucine 118 are enriched in polar residues. Phosphoserine occurs at positions 117, 119, and 124. A phosphothreonine mark is found at threonine 128 and threonine 132. Residues serine 133, serine 153, serine 191, serine 197, serine 198, serine 202, serine 209, and serine 262 each carry the phosphoserine modification. Residues glycine 165–serine 202 are disordered. Positions glycine 193–serine 202 are enriched in low complexity. Residues glutamate 249–serine 275 form a disordered region. The segment covering leucine 257 to serine 270 has biased composition (low complexity). Residues histidine 280–alanine 340 enclose the LIM zinc-binding domain.

As to quaternary structure, interacts with alpha-actinins ACTN1 and ACTN4, FLNA and MYH9. Interacts (via LIM zinc-binding domain) with MKRN2.

The protein resides in the cytoplasm. The protein localises to the cytoskeleton. Probable adapter protein located at the actin cytoskeleton that promotes cell attachment. Necessary for the migratory capacity of epithelial cells. Overexpression enhances cell adhesion to collagen and fibronectin and suppresses anchorage independent growth. May contribute to tumor cell migratory capacity. The polypeptide is PDZ and LIM domain protein 2 (PDLIM2) (Bos taurus (Bovine)).